We begin with the raw amino-acid sequence, 284 residues long: ATP phosphoribosyltransferase (284 aa).

It belongs to the ATP phosphoribosyltransferase family. Long subfamily. Equilibrium between an active dimeric form, an inactive hexameric form and higher aggregates. Interconversion between the various forms is largely reversible and is influenced by the natural substrates and inhibitors of the enzyme. The cofactor is Mg(2+).

It is found in the cytoplasm. It carries out the reaction 1-(5-phospho-beta-D-ribosyl)-ATP + diphosphate = 5-phospho-alpha-D-ribose 1-diphosphate + ATP. Its pathway is amino-acid biosynthesis; L-histidine biosynthesis; L-histidine from 5-phospho-alpha-D-ribose 1-diphosphate: step 1/9. Its activity is regulated as follows. Feedback inhibited by histidine. In terms of biological role, catalyzes the condensation of ATP and 5-phosphoribose 1-diphosphate to form N'-(5'-phosphoribosyl)-ATP (PR-ATP). Has a crucial role in the pathway because the rate of histidine biosynthesis seems to be controlled primarily by regulation of HisG enzymatic activity. In Mycobacterium avium (strain 104), this protein is ATP phosphoribosyltransferase.